A 291-amino-acid polypeptide reads, in one-letter code: Small ribosomal subunit protein uS3 (291 aa).

A KH type-2 domain is found at 39-110 (IRLEIMKFLK…KISIKIKEVK (72 aa)).

This sequence belongs to the universal ribosomal protein uS3 family. In terms of assembly, part of the 30S ribosomal subunit. Forms a tight complex with proteins S10 and S14.

Its function is as follows. Binds the lower part of the 30S subunit head. Binds mRNA in the 70S ribosome, positioning it for translation. This Borreliella afzelii (strain PKo) (Borrelia afzelii) protein is Small ribosomal subunit protein uS3.